The following is a 234-amino-acid chain: Zinc finger FYVE domain-containing protein 21 (234 aa).

The segment at 44–104 (DKECPRCMQC…QCADCALVSH (61 aa)) adopts an FYVE-type zinc-finger fold. Zn(2+)-binding residues include C50, C53, C66, C69, C74, C77, C96, and C99. The tract at residues 107 to 234 (AEFYDKQLKV…TKLLYESRDQ (128 aa)) is PH-like.

In terms of assembly, interacts with PTK2/FAK1. As to expression, widely expressed.

Its subcellular location is the cell junction. The protein localises to the focal adhesion. It is found in the cytoplasmic vesicle. It localises to the endosome. Its function is as follows. Plays a role in cell adhesion, and thereby in cell motility which requires repeated formation and disassembly of focal adhesions. Regulates microtubule-induced PTK2/FAK1 dephosphorylation, an event important for focal adhesion disassembly, as well as integrin beta-1/ITGB1 cell surface expression. This chain is Zinc finger FYVE domain-containing protein 21 (Zfyve21), found in Mus musculus (Mouse).